Reading from the N-terminus, the 207-residue chain is MGTVKITSRYGILLGFIALLCTIISTGIFFLTKDKIDAVIAAQQRELLLQVIPQDYFNNNLLESAVIPQDKNFVGIQKIYFAKKDGNISAYAYETTAPDGYSGDIRLLVGLDPKGEVLGVRVIEHHETPGLGDKIERRISNWILGFTNQSINEHNLSEWAVKKDGGKFDQFSGATITPRAVVNQTKRSALIMLNNQALLQQLSTQVK.

Residues 11–31 (GILLGFIALLCTIISTGIFFL) traverse the membrane as a helical segment. At T175 the chain carries FMN phosphoryl threonine.

Belongs to the RnfG family. As to quaternary structure, the complex is composed of six subunits: RnfA, RnfB, RnfC, RnfD, RnfE and RnfG. FMN is required as a cofactor.

The protein localises to the cell inner membrane. In terms of biological role, part of a membrane-bound complex that couples electron transfer with translocation of ions across the membrane. This is Ion-translocating oxidoreductase complex subunit G from Haemophilus influenzae (strain 86-028NP).